Here is a 60-residue protein sequence, read N- to C-terminus: UPF0509 protein Ent638_2183 (60 aa).

Belongs to the UPF0509 family.

This Enterobacter sp. (strain 638) protein is UPF0509 protein Ent638_2183.